The sequence spans 315 residues: L-lactate dehydrogenase (315 aa).

Val12, Asp33, and Tyr65 together coordinate NAD(+). Substrate contacts are provided by residues Gln82, Arg88, and 120–123 (NPVD). Residues 118–120 (ISN) and Ser143 contribute to the NAD(+) site. A substrate-binding site is contributed by 148–151 (DTSR). Beta-D-fructose 1,6-bisphosphate contacts are provided by Arg153 and His168. Residue His175 is the Proton acceptor of the active site. Tyr219 carries the phosphotyrosine modification. Residue Thr228 participates in substrate binding.

The protein belongs to the LDH/MDH superfamily. LDH family. Homotetramer.

Its subcellular location is the cytoplasm. The catalysed reaction is (S)-lactate + NAD(+) = pyruvate + NADH + H(+). Its pathway is fermentation; pyruvate fermentation to lactate; (S)-lactate from pyruvate: step 1/1. Allosterically activated by fructose 1,6-bisphosphate (FBP). Catalyzes the conversion of lactate to pyruvate. The chain is L-lactate dehydrogenase from Mycoplasmopsis pulmonis (strain UAB CTIP) (Mycoplasma pulmonis).